Consider the following 417-residue polypeptide: NADH-quinone oxidoreductase subunit D (417 aa).

This sequence belongs to the complex I 49 kDa subunit family. As to quaternary structure, NDH-1 is composed of 14 different subunits. Subunits NuoB, C, D, E, F, and G constitute the peripheral sector of the complex.

It is found in the cell inner membrane. The catalysed reaction is a quinone + NADH + 5 H(+)(in) = a quinol + NAD(+) + 4 H(+)(out). Its function is as follows. NDH-1 shuttles electrons from NADH, via FMN and iron-sulfur (Fe-S) centers, to quinones in the respiratory chain. The immediate electron acceptor for the enzyme in this species is believed to be ubiquinone. Couples the redox reaction to proton translocation (for every two electrons transferred, four hydrogen ions are translocated across the cytoplasmic membrane), and thus conserves the redox energy in a proton gradient. The protein is NADH-quinone oxidoreductase subunit D of Coxiella burnetii (strain CbuG_Q212) (Coxiella burnetii (strain Q212)).